The chain runs to 89 residues: Small ribosomal subunit protein bS16 (89 aa).

The protein belongs to the bacterial ribosomal protein bS16 family.

This Desulforamulus reducens (strain ATCC BAA-1160 / DSM 100696 / MI-1) (Desulfotomaculum reducens) protein is Small ribosomal subunit protein bS16.